Here is a 328-residue protein sequence, read N- to C-terminus: D-cysteine desulfhydrase (328 aa).

Lys-51 carries the N6-(pyridoxal phosphate)lysine modification.

It belongs to the ACC deaminase/D-cysteine desulfhydrase family. As to quaternary structure, homodimer. Requires pyridoxal 5'-phosphate as cofactor.

The enzyme catalyses D-cysteine + H2O = hydrogen sulfide + pyruvate + NH4(+) + H(+). Catalyzes the alpha,beta-elimination reaction of D-cysteine and of several D-cysteine derivatives. It could be a defense mechanism against D-cysteine. The sequence is that of D-cysteine desulfhydrase from Salmonella paratyphi B (strain ATCC BAA-1250 / SPB7).